The primary structure comprises 825 residues: Neuroligin-3 (825 aa).

The N-terminal stretch at 1–34 is a signal peptide; that stretch reads MWLQPSLSLSPTPTVGRSLCLTLGFLSLVLRAST. The Extracellular portion of the chain corresponds to 35 to 686; that stretch reads QAPAPTVNTH…NPRDYSTELS (652 aa). Asn-95 is a glycosylation site (N-linked (GlcNAc...) asparagine). Cysteines 103 and 138 form a disulfide. The disordered stretch occupies residues 151 to 172; the sequence is SGAKKQGEDLADNDGDEDEDIR. Residues 159–171 show a composition bias toward acidic residues; it reads DLADNDGDEDEDI. Disulfide bonds link Cys-317–Cys-328 and Cys-487–Cys-521. Residue Asn-522 is glycosylated (N-linked (GlcNAc...) asparagine). Polar residues-rich tracts occupy residues 622-633 and 654-666; these read TKVPPPDTTHSS and AYSN…SWNG. A disordered region spans residues 622-668; that stretch reads TKVPPPDTTHSSHITRRPNGKTWSTKRPAISPAYSNENAPGSWNGDQ. The chain crosses the membrane as a helical span at residues 687 to 707; the sequence is VTIAVGASLLFLNVLAFAALY. Residues 708–825 are Cytoplasmic-facing; sequence YRKDKRRQEP…LPHSHSTTRV (118 aa). At Ser-722 the chain carries Phosphoserine. Tyr-769 bears the Phosphotyrosine mark.

This sequence belongs to the type-B carboxylesterase/lipase family. In terms of assembly, homodimer, and heterodimer with NLGN1 and NLGN2. Interacts with neurexins NRXN1, NRXN2 and NRXN3. Interaction with neurexins is mediated by heparan sulfate glycan modification on neurexin. Interacts (via its C-terminus) with DLG4/PSD-95 (via PDZ domain 3). In terms of tissue distribution, brain and arteries (at protein level). Detected in heart, brain, spleen, lung, liver, skeletal muscle, kidney and testis. Expressed in olfactory bulb and olfactory epithelium. Found in olfactory ensheathing glia but not in olfactory neurons, and in developing peripheral glia.

The protein resides in the cell membrane. It localises to the synapse. In terms of biological role, cell surface protein involved in cell-cell-interactions via its interactions with neurexin family members. Plays a role in synapse function and synaptic signal transmission, and probably mediates its effects by recruiting and clustering other synaptic proteins. May promote the initial formation of synapses, but is not essential for this. May also play a role in glia-glia or glia-neuron interactions in the developing peripheral nervous system. The polypeptide is Neuroligin-3 (Nlgn3) (Mus musculus (Mouse)).